The chain runs to 417 residues: UDP-N-acetylglucosamine 1-carboxyvinyltransferase (417 aa).

22–23 (KN) serves as a coordination point for phosphoenolpyruvate. Arg93 is a binding site for UDP-N-acetyl-alpha-D-glucosamine. Cys117 (proton donor) is an active-site residue. Residue Cys117 is modified to 2-(S-cysteinyl)pyruvic acid O-phosphothioketal. UDP-N-acetyl-alpha-D-glucosamine is bound by residues 122 to 126 (RPVDQ), Asp304, and Ile326.

The protein belongs to the EPSP synthase family. MurA subfamily.

It localises to the cytoplasm. The enzyme catalyses phosphoenolpyruvate + UDP-N-acetyl-alpha-D-glucosamine = UDP-N-acetyl-3-O-(1-carboxyvinyl)-alpha-D-glucosamine + phosphate. It participates in cell wall biogenesis; peptidoglycan biosynthesis. Its function is as follows. Cell wall formation. Adds enolpyruvyl to UDP-N-acetylglucosamine. The polypeptide is UDP-N-acetylglucosamine 1-carboxyvinyltransferase (Laribacter hongkongensis (strain HLHK9)).